A 353-amino-acid chain; its full sequence is (-)-beta-caryophyllene synthase ((2E,6E)-farnesyl diphosphate cyclizing) (353 aa).

Positions 85 and 89 each coordinate Mg(2+). Positions 85-89 (DDQFD) match the DDXXD motif motif. Position 179 (Arg-179) interacts with substrate. Positions 225 and 229 each coordinate Mg(2+). Residue Lys-232 participates in substrate binding. Glu-233 serves as a coordination point for Mg(2+). 320–321 (RF) is a binding site for substrate.

It belongs to the terpene synthase family. It depends on Mg(2+) as a cofactor.

The catalysed reaction is (2E,6E)-farnesyl diphosphate = (-)-(E)-beta-caryophyllene + diphosphate. Its pathway is secondary metabolite biosynthesis; terpenoid biosynthesis. Functionally, catalyzes the conversion of (2E,6E)-farnesyl diphosphate (FPP) to yield the bicyclic sesquiterpene (2S,10R)-(-)-(E)-beta-caryophyllene via a probable 1,10-cyclization, which could involve the abstraction of the pyrophosphate from FPP to yield a (E,E)-germacradienyl cation. This chain is (-)-beta-caryophyllene synthase ((2E,6E)-farnesyl diphosphate cyclizing) (ptlA), found in Saccharothrix espanaensis (strain ATCC 51144 / DSM 44229 / JCM 9112 / NBRC 15066 / NRRL 15764).